We begin with the raw amino-acid sequence, 208 residues long: Small ribosomal subunit protein uS4 (208 aa).

An S4 RNA-binding domain is found at 98–159 (RRLDNVIYRL…KSRTVAVITN (62 aa)).

This sequence belongs to the universal ribosomal protein uS4 family. Part of the 30S ribosomal subunit. Contacts protein S5. The interaction surface between S4 and S5 is involved in control of translational fidelity.

In terms of biological role, one of the primary rRNA binding proteins, it binds directly to 16S rRNA where it nucleates assembly of the body of the 30S subunit. With S5 and S12 plays an important role in translational accuracy. The sequence is that of Small ribosomal subunit protein uS4 from Desulfatibacillum aliphaticivorans.